A 237-amino-acid chain; its full sequence is tRNA (guanine-N(1)-)-methyltransferase (237 aa).

S-adenosyl-L-methionine-binding positions include G112 and 132-137 (IGDFVL).

The protein belongs to the RNA methyltransferase TrmD family. As to quaternary structure, homodimer.

It is found in the cytoplasm. The enzyme catalyses guanosine(37) in tRNA + S-adenosyl-L-methionine = N(1)-methylguanosine(37) in tRNA + S-adenosyl-L-homocysteine + H(+). Functionally, specifically methylates guanosine-37 in various tRNAs. In Thermosynechococcus vestitus (strain NIES-2133 / IAM M-273 / BP-1), this protein is tRNA (guanine-N(1)-)-methyltransferase.